The sequence spans 359 residues: Small ribosomal subunit biogenesis GTPase RsgA (359 aa).

One can recognise a CP-type G domain in the interval 101-259; the sequence is KRKGSQAIAS…LMDNPGIREV (159 aa). Residues 149–152 and 201–209 each bind GTP; these read NKKD and GSSGAGKST. Zn(2+) contacts are provided by cysteine 284, cysteine 289, histidine 291, and cysteine 297. The tract at residues 331 to 359 is disordered; sequence DPEEARKKKQKDKQMSKALQKRLKDKGRK. Residues 349–359 are compositionally biased toward basic residues; that stretch reads LQKRLKDKGRK.

This sequence belongs to the TRAFAC class YlqF/YawG GTPase family. RsgA subfamily. In terms of assembly, monomer. Associates with 30S ribosomal subunit, binds 16S rRNA. It depends on Zn(2+) as a cofactor.

The protein resides in the cytoplasm. In terms of biological role, one of several proteins that assist in the late maturation steps of the functional core of the 30S ribosomal subunit. Helps release RbfA from mature subunits. May play a role in the assembly of ribosomal proteins into the subunit. Circularly permuted GTPase that catalyzes slow GTP hydrolysis, GTPase activity is stimulated by the 30S ribosomal subunit. The chain is Small ribosomal subunit biogenesis GTPase RsgA from Leptospira interrogans serogroup Icterohaemorrhagiae serovar Lai (strain 56601).